We begin with the raw amino-acid sequence, 321 residues long: Methenyltetrahydromethanopterin cyclohydrolase (321 aa).

It belongs to the MCH family.

It localises to the cytoplasm. It catalyses the reaction 5,10-methenyl-5,6,7,8-tetrahydromethanopterin + H2O = N(5)-formyl-5,6,7,8-tetrahydromethanopterin + H(+). Its pathway is one-carbon metabolism; methanogenesis from CO(2); 5,10-methenyl-5,6,7,8-tetrahydromethanopterin from CO(2): step 3/3. Functionally, catalyzes the reversible interconversion of 5-formyl-H(4)MPT to methenyl-H(4)MPT(+). This Methanosarcina barkeri (strain Fusaro / DSM 804) protein is Methenyltetrahydromethanopterin cyclohydrolase (mch).